We begin with the raw amino-acid sequence, 164 residues long: Protein-export protein SecB (164 aa).

The protein belongs to the SecB family. As to quaternary structure, homotetramer, a dimer of dimers. One homotetramer interacts with 1 SecA dimer.

It localises to the cytoplasm. In terms of biological role, one of the proteins required for the normal export of preproteins out of the cell cytoplasm. It is a molecular chaperone that binds to a subset of precursor proteins, maintaining them in a translocation-competent state. It also specifically binds to its receptor SecA. This chain is Protein-export protein SecB, found in Chromohalobacter salexigens (strain ATCC BAA-138 / DSM 3043 / CIP 106854 / NCIMB 13768 / 1H11).